We begin with the raw amino-acid sequence, 306 residues long: MSTLGHQYDNSLVSNAFGFLRLPMNFQPYDSDADWVITGVPFDMATSGRAGGRHGPAAIRQVSTNLAWEHNRFPWNFDMRERLNVVDCGDLVYAFGDAREMSEKLQAHAEKLLAAGKRMLSFGGDHFVTLPLLRAHAKHFGKMALVHFDAHTDTYANGCEFDHGTMFYTAPKEGLIDPNHSVQIGIRTEFDIDNGFTVLDACQVNDRSVDDVIAQVKQIVGDMPVYLTFDIDCLDPAFAPGTGTPVIGGLTSDRAIKLVRGLKDLNIVGMDVVEVAPAYDQSEITALAAATLALEMLYIQAAKKGE.

Histidine 126, aspartate 149, histidine 151, aspartate 153, aspartate 230, and aspartate 232 together coordinate Mn(2+).

It belongs to the arginase family. Agmatinase subfamily. Requires Mn(2+) as cofactor.

It carries out the reaction agmatine + H2O = urea + putrescine. The protein operates within amine and polyamine biosynthesis; putrescine biosynthesis via agmatine pathway; putrescine from agmatine: step 1/1. Catalyzes the formation of putrescine from agmatine. This Escherichia coli (strain SE11) protein is Agmatinase.